Reading from the N-terminus, the 256-residue chain is Autophagy-related protein 40 (256 aa).

The N-terminal stretch at 1–16 is a signal peptide; the sequence is MFNLILWPLFLLTSVA. Residues 17 to 67 lie on the Lumenal side of the membrane; sequence IPLQLTLEVVYLTSSVDFSKASAAKTATSLGQSPVVITIYKSLLKYWSLYE. Residues 68-88 form a helical membrane-spanning segment; it reads FIHFIYLYTPIDAFLNFLPFT. The Cytoplasmic portion of the chain corresponds to 89–256; the sequence is SLLMSFGSIC…DILDETTELD (168 aa). The disordered stretch occupies residues 197 to 243; that stretch reads QPQGDKNRYQNGDRESTKNGAAYQKSSQQSSSFEQNFTSTEFPNDYD. The span at 199–213 shows a compositional bias: basic and acidic residues; that stretch reads QGDKNRYQNGDREST. Over residues 222-238 the composition is skewed to low complexity; it reads SSQQSSSFEQNFTSTEF. The ATG8-binding signature appears at 242–245; that stretch reads YDFM.

In terms of assembly, interacts with ATG8 and ATG11.

It is found in the endoplasmic reticulum membrane. It localises to the preautophagosomal structure membrane. In terms of biological role, acts as a receptor for reticulophagy. Directs autophagic sequestration of folded tubules/sheets derived from the cortical endoplasmic reticulum (cER) and the cytoplasmic endoplasmic reticulum (cytoER) into autophagosomes. Is not required for the cytoplasm-to-vacuole targeting pathway, mitophagy, pexophagy, and non-selective autophagy. The sequence is that of Autophagy-related protein 40 from Saccharomyces cerevisiae (strain ATCC 204508 / S288c) (Baker's yeast).